The sequence spans 1037 residues: Sentrin-specific protease 7 (1037 aa).

A compositionally biased stretch (basic residues) spans 1–10; sequence MDRARPGRRR. Disordered stretches follow at residues 1-27 and 185-399; these read MDRA…SSPA and SDTA…ENSS. Ser-12, Ser-13, and Ser-25 each carry phosphoserine. Residues 192–208 show a composition bias toward low complexity; sequence SEQLSSSSDGSLESCQS. Over residues 272 to 282 the composition is skewed to polar residues; sequence GTSNKNTSYSY. Basic residues predominate over residues 290 to 300; sequence VSRKRKKRGRS. 2 stretches are compositionally biased toward basic and acidic residues: residues 301–321 and 328–341; these read NFHD…HTKE and VSRK…DSHQ. Positions 379–399 are enriched in low complexity; sequence ASSPNKSLESSASSEVSENSS. Residues Ser-434 and Ser-435 each carry the phosphoserine modification. The tract at residues 747 to 1037 is protease; sequence LGVTNEDLEC…HLQQQKGGSC (291 aa). Residue His-847 is part of the active site. Residues 873-909 are disordered; that stretch reads QFQGQQSQHDHKMTDNDPHTTSTVSTSAEDSQSTEVN. A compositionally biased stretch (basic and acidic residues) spans 880-890; the sequence is QHDHKMTDNDP. A compositionally biased stretch (polar residues) spans 891 to 909; it reads HTTSTVSTSAEDSQSTEVN. Asp-926 is an active-site residue. The active-site Nucleophile is Cys-979.

This sequence belongs to the peptidase C48 family.

It localises to the cytoplasm. In terms of biological role, protease that acts as a positive regulator of the cGAS-STING pathway by catalyzing desumoylation of CGAS. Desumoylation of CGAS promotes DNA-binding activity of CGAS, subsequent oligomerization and activation. Deconjugates SUMO2 and SUMO3 from targeted proteins, but not SUMO1. Catalyzes the deconjugation of poly-SUMO2 and poly-SUMO3 chains. Has very low efficiency in processing full-length SUMO proteins to their mature forms. This is Sentrin-specific protease 7 from Mus musculus (Mouse).